The sequence spans 51 residues: Large ribosomal subunit protein eL39 (51 aa).

This sequence belongs to the eukaryotic ribosomal protein eL39 family.

The protein is Large ribosomal subunit protein eL39 of Pyrobaculum neutrophilum (strain DSM 2338 / JCM 9278 / NBRC 100436 / V24Sta) (Thermoproteus neutrophilus).